Reading from the N-terminus, the 542-residue chain is L-ornithine N(5)-monooxygenase (542 aa).

Residues 45–53 (EKHEVFRWH) and Gln64 each bind FAD. Lys69 provides a ligand contact to substrate. Residue 218-221 (SGQS) coordinates NADP(+). Residues 263–266 (NEIF) and Asn294 contribute to the substrate site. NADP(+) is bound at residue 294–296 (NYS). A disordered region spans residues 443-472 (FFHDSSPSTASSSTVSTPPTSPETSRFSSP). Low complexity predominate over residues 447–472 (SSPSTASSSTVSTPPTSPETSRFSSP). 518-520 (TLL) is a binding site for FAD. Residue Ser521 participates in substrate binding.

It belongs to the lysine N(6)-hydroxylase/L-ornithine N(5)-oxygenase family. In terms of assembly, homotetramer. The cofactor is FAD.

The enzyme catalyses L-ornithine + NADPH + O2 = N(5)-hydroxy-L-ornithine + NADP(+) + H2O. The catalysed reaction is L-ornithine + NADH + O2 = N(5)-hydroxy-L-ornithine + NAD(+) + H2O. It functions in the pathway siderophore biosynthesis. In terms of biological role, L-ornithine N(5)-monooxygenase; part of the gene cluster that mediates the biosynthesis of coprinoferrin, an acylated tripeptide hydroxamate siderophore. The biosynthesis of coprinoferrin depends on the hydroxylation of ornithine to N(5)-hydroxyornithine, catalyzed by the monooxygenase cpf2. The second step, the acylation of N(5)-hydroxy-L-ornithine to yield N(5)-hexanoyl-N(5)-hydroxyl-L-ornithine is catalyzed by a not yet identified acyltransferase. Finally, assembly of coprinoferrin is catalyzed by the nonribosomal peptide synthase (NRPS) cpf1 via amide bond formation between three N(5)-hexanoyl-N(5)-hydroxyl-L-ornithine molecules to release the linear trimer. Interestingly, proteins seemingly not directly related to biosynthesis, such as transcription factors, replication factors, and autophagy-related proteins, are conserved among the clusters homologous to the coprinoferrin cluster, suggesting that the cluster may also play developmental and cell biological functions. The protein is L-ornithine N(5)-monooxygenase of Coprinopsis cinerea (strain Okayama-7 / 130 / ATCC MYA-4618 / FGSC 9003) (Inky cap fungus).